The following is a 497-amino-acid chain: Homeotic protein empty spiracles (497 aa).

Disordered regions lie at residues 34–117 (NDVS…HLSP), 161–262 (SPLQ…MMMP), and 441–497 (NRRT…DASH). Over residues 35 to 50 (DVSTAGGNSTPDLSGP) the composition is skewed to polar residues. A compositionally biased stretch (pro residues) spans 51–68 (QSPPPGERNVPGSPPQTP). The segment covering 96-117 (PHAQQQQQQHLQAPHPHPHLSP) has biased composition (low complexity). Residues 161–176 (SPLQTRLSPETEQPQM) show a composition bias toward polar residues. Composition is skewed to low complexity over residues 208–239 (PKSVSPQSSQPSSSPTLLISSPHATPPQQQQQ) and 248–262 (PAMMHPGGAGPMMMP). The segment at residues 391-450 (PKRIRTAFSPSQLLKLEHAFESNQYVVGAERKALAQNLNLSETQVKVWFQNRRTKHKRMQ) is a DNA-binding region (homeobox). Acidic residues predominate over residues 470-497 (GDEDDDELIDMEMDECPSDEEHELDASH).

This sequence belongs to the EMX homeobox family.

The protein resides in the nucleus. In terms of biological role, acts as a homeotic selector gene controlling antennal and mandibular segment identity. This chain is Homeotic protein empty spiracles (ems), found in Drosophila melanogaster (Fruit fly).